We begin with the raw amino-acid sequence, 270 residues long: 3-methyl-2-oxobutanoate hydroxymethyltransferase (270 aa).

Positions 50 and 89 each coordinate Mg(2+). Residues 50–51 (DS), D89, and K118 contribute to the 3-methyl-2-oxobutanoate site. Position 120 (E120) interacts with Mg(2+). E187 functions as the Proton acceptor in the catalytic mechanism.

The protein belongs to the PanB family. As to quaternary structure, homodecamer; pentamer of dimers. It depends on Mg(2+) as a cofactor.

Its subcellular location is the cytoplasm. It catalyses the reaction 3-methyl-2-oxobutanoate + (6R)-5,10-methylene-5,6,7,8-tetrahydrofolate + H2O = 2-dehydropantoate + (6S)-5,6,7,8-tetrahydrofolate. It participates in cofactor biosynthesis; (R)-pantothenate biosynthesis; (R)-pantoate from 3-methyl-2-oxobutanoate: step 1/2. Its function is as follows. Catalyzes the reversible reaction in which hydroxymethyl group from 5,10-methylenetetrahydrofolate is transferred onto alpha-ketoisovalerate to form ketopantoate. The chain is 3-methyl-2-oxobutanoate hydroxymethyltransferase from Helicobacter pylori (strain ATCC 700392 / 26695) (Campylobacter pylori).